A 336-amino-acid polypeptide reads, in one-letter code: Holliday junction branch migration complex subunit RuvB (336 aa).

The large ATPase domain (RuvB-L) stretch occupies residues 1 to 182 (MKERIVNLET…FGMSFRMQFY (182 aa)). ATP-binding positions include L21, R22, G63, K66, T67, S68, 129–131 (EDF), R172, Y182, and R219. T67 serves as a coordination point for Mg(2+). A small ATPAse domain (RuvB-S) region spans residues 183 to 253 (SPSELSLIIK…ITLHALNELG (71 aa)). A head domain (RuvB-H) region spans residues 256 to 336 (ELGFDEADLA…IPTLNPQTLF (81 aa)). The DNA site is built by R310 and R315.

The protein belongs to the RuvB family. Homohexamer. Forms an RuvA(8)-RuvB(12)-Holliday junction (HJ) complex. HJ DNA is sandwiched between 2 RuvA tetramers; dsDNA enters through RuvA and exits via RuvB. An RuvB hexamer assembles on each DNA strand where it exits the tetramer. Each RuvB hexamer is contacted by two RuvA subunits (via domain III) on 2 adjacent RuvB subunits; this complex drives branch migration. In the full resolvosome a probable DNA-RuvA(4)-RuvB(12)-RuvC(2) complex forms which resolves the HJ.

It localises to the cytoplasm. It carries out the reaction ATP + H2O = ADP + phosphate + H(+). In terms of biological role, the RuvA-RuvB-RuvC complex processes Holliday junction (HJ) DNA during genetic recombination and DNA repair, while the RuvA-RuvB complex plays an important role in the rescue of blocked DNA replication forks via replication fork reversal (RFR). RuvA specifically binds to HJ cruciform DNA, conferring on it an open structure. The RuvB hexamer acts as an ATP-dependent pump, pulling dsDNA into and through the RuvAB complex. RuvB forms 2 homohexamers on either side of HJ DNA bound by 1 or 2 RuvA tetramers; 4 subunits per hexamer contact DNA at a time. Coordinated motions by a converter formed by DNA-disengaged RuvB subunits stimulates ATP hydrolysis and nucleotide exchange. Immobilization of the converter enables RuvB to convert the ATP-contained energy into a lever motion, pulling 2 nucleotides of DNA out of the RuvA tetramer per ATP hydrolyzed, thus driving DNA branch migration. The RuvB motors rotate together with the DNA substrate, which together with the progressing nucleotide cycle form the mechanistic basis for DNA recombination by continuous HJ branch migration. Branch migration allows RuvC to scan DNA until it finds its consensus sequence, where it cleaves and resolves cruciform DNA. In Helicobacter pylori (strain P12), this protein is Holliday junction branch migration complex subunit RuvB.